Consider the following 507-residue polypeptide: ATP synthase subunit alpha, chloroplastic (507 aa).

Residue 170-177 (GDRQTGKA) coordinates ATP.

This sequence belongs to the ATPase alpha/beta chains family. As to quaternary structure, F-type ATPases have 2 components, CF(1) - the catalytic core - and CF(0) - the membrane proton channel. CF(1) has five subunits: alpha(3), beta(3), gamma(1), delta(1), epsilon(1). CF(0) has four main subunits: a, b, b' and c.

Its subcellular location is the plastid. It is found in the chloroplast thylakoid membrane. The catalysed reaction is ATP + H2O + 4 H(+)(in) = ADP + phosphate + 5 H(+)(out). Produces ATP from ADP in the presence of a proton gradient across the membrane. The alpha chain is a regulatory subunit. This Calycanthus floridus var. glaucus (Eastern sweetshrub) protein is ATP synthase subunit alpha, chloroplastic.